The chain runs to 319 residues: Protoheme IX farnesyltransferase (319 aa).

Helical transmembrane passes span 59 to 79 (IGLI…AGAF), 108 to 128 (EALV…WFGA), 131 to 151 (LSAW…TIIL), 158 to 178 (NIVW…AAVT), 183 to 203 (WPAI…YWPL), 232 to 252 (VVLY…AGGA), 254 to 274 (WVYT…SHAL), and 299 to 319 (LTLL…VIGG).

Belongs to the UbiA prenyltransferase family. Protoheme IX farnesyltransferase subfamily.

It is found in the cell membrane. It catalyses the reaction heme b + (2E,6E)-farnesyl diphosphate + H2O = Fe(II)-heme o + diphosphate. It participates in porphyrin-containing compound metabolism; heme O biosynthesis; heme O from protoheme: step 1/1. Its function is as follows. Converts heme B (protoheme IX) to heme O by substitution of the vinyl group on carbon 2 of heme B porphyrin ring with a hydroxyethyl farnesyl side group. The chain is Protoheme IX farnesyltransferase from Pseudarthrobacter chlorophenolicus (strain ATCC 700700 / DSM 12829 / CIP 107037 / JCM 12360 / KCTC 9906 / NCIMB 13794 / A6) (Arthrobacter chlorophenolicus).